We begin with the raw amino-acid sequence, 75 residues long: Guanine nucleotide-binding protein G(I)/G(S)/G(O) subunit gamma-4 (75 aa).

Cysteine 72 is subject to Cysteine methyl ester. Cysteine 72 carries S-geranylgeranyl cysteine lipidation. The propeptide at 73–75 (TIL) is removed in mature form.

Belongs to the G protein gamma family. In terms of assembly, g proteins are composed of 3 units, alpha, beta and gamma. Interacts with beta-1 and beta-2, but not with beta-3. Interacts with KCNK1. Interacts (via C-terminus) with KCNK2/TREK-1 (via N-terminus); this interaction confers ion selectivity to Cl(-) and L-glutamate. As to expression, brain, kidney, pancreas, skeletal muscle and faintly in cardiac muscle.

It localises to the cell membrane. In terms of biological role, guanine nucleotide-binding proteins (G proteins) are involved as a modulator or transducer in various transmembrane signaling systems. The beta and gamma chains are required for the GTPase activity, for replacement of GDP by GTP, and for G protein-effector interaction. The polypeptide is Guanine nucleotide-binding protein G(I)/G(S)/G(O) subunit gamma-4 (GNG4) (Homo sapiens (Human)).